A 454-amino-acid chain; its full sequence is Apyrase (454 aa).

Residues 1–7 (MLNQNSH) are Cytoplasmic-facing. Residues 8-28 (FIFIILAIFLVLPLSLLSKNV) traverse the membrane as a helical; Signal-anchor for type II membrane protein segment. Topologically, residues 29-454 (NAQIPLRRHL…TTNKIRVASS (426 aa)) are extracellular. 48–58 (VIFDAGSTGSR) provides a ligand contact to ATP. An N-linked (GlcNAc...) asparagine glycan is attached at N151. E170 serves as the catalytic Proton acceptor. ATP is bound at residue 194–204 (ATIDLGGGSVQ). N-linked (GlcNAc...) asparagine glycosylation occurs at N262.

It belongs to the GDA1/CD39 NTPase family. The cofactor is Ca(2+). In terms of processing, the N-terminus is blocked.

It is found in the membrane. It carries out the reaction a ribonucleoside 5'-triphosphate + 2 H2O = a ribonucleoside 5'-phosphate + 2 phosphate + 2 H(+). Functionally, catalyzes the hydrolysis of phosphoanhydride bonds of nucleoside tri- and di-phosphates. This is Apyrase (RROP1) from Solanum tuberosum (Potato).